Consider the following 236-residue polypeptide: Hydantoin racemase (236 aa).

Homohexamer, homoheptamer or homooctamer.

It catalyses the reaction a D-5-monosubstituted hydantoin = a L-5-monosubstituted hydantoin. The catalysed reaction is D-5-benzylhydantoin = L-5-benzylhydantoin. With respect to regulation, completely inhibited by HgCl(2) and iodoacetamide. Stimulated by dithiothreitol. In terms of biological role, involved in the asymmetric conversion of racemic 5-substituted hydantoins to the corresponding L-amino acids. Catalyzes the racemization via enolization of D- and L-5-monosubstituted hydantoins. It shows preference for hydantoins with arylalkyl side chains such as 5-benzylhydantoin (BH) and, to a lesser extent, 5-(3-indolylmethylene)hydantoin (IMH). This chain is Hydantoin racemase, found in Paenarthrobacter aurescens (Arthrobacter aurescens).